A 447-amino-acid polypeptide reads, in one-letter code: Trigger factor (447 aa).

A PPIase FKBP-type domain is found at 164-249 (GNQVTFDFEG…VKLVEKSKLP (86 aa)).

Belongs to the FKBP-type PPIase family. Tig subfamily.

The protein localises to the cytoplasm. The enzyme catalyses [protein]-peptidylproline (omega=180) = [protein]-peptidylproline (omega=0). In terms of biological role, involved in protein export. Acts as a chaperone by maintaining the newly synthesized protein in an open conformation. Functions as a peptidyl-prolyl cis-trans isomerase. In Psychrobacter cryohalolentis (strain ATCC BAA-1226 / DSM 17306 / VKM B-2378 / K5), this protein is Trigger factor.